The sequence spans 292 residues: Protoheme IX farnesyltransferase (292 aa).

9 helical membrane passes run 11 to 31, 37 to 57, 85 to 105, 108 to 128, 133 to 153, 163 to 183, 199 to 219, 223 to 243, and 261 to 281; these read FGIV…GFQI, WKIF…SLAL, AAAG…LFKL, VAGW…TLWW, VFAA…GYAV, SLYL…VLAI, VALG…VYVG, AAPM…PFVF, and WLAF…IPVI.

The protein belongs to the UbiA prenyltransferase family. Protoheme IX farnesyltransferase subfamily.

It localises to the cell inner membrane. The catalysed reaction is heme b + (2E,6E)-farnesyl diphosphate + H2O = Fe(II)-heme o + diphosphate. Its pathway is porphyrin-containing compound metabolism; heme O biosynthesis; heme O from protoheme: step 1/1. In terms of biological role, converts heme B (protoheme IX) to heme O by substitution of the vinyl group on carbon 2 of heme B porphyrin ring with a hydroxyethyl farnesyl side group. The protein is Protoheme IX farnesyltransferase of Bdellovibrio bacteriovorus (strain ATCC 15356 / DSM 50701 / NCIMB 9529 / HD100).